A 436-amino-acid chain; its full sequence is Ribosomal protein uS12 methylthiotransferase RimO (436 aa).

Positions 4–122 constitute an MTTase N-terminal domain; the sequence is KRIDIITLGC…LLQDLGKTYH (119 aa). Cysteine 13, cysteine 51, cysteine 85, cysteine 146, cysteine 150, and cysteine 153 together coordinate [4Fe-4S] cluster. One can recognise a Radical SAM core domain in the interval 132–363; that stretch reads TTPKHYAYLK…MDIQQGISAE (232 aa). Positions 366-433 constitute a TRAM domain; the sequence is AAKIGQQMKV…DFDLYAKILN (68 aa).

Belongs to the methylthiotransferase family. RimO subfamily. [4Fe-4S] cluster serves as cofactor.

The protein localises to the cytoplasm. It carries out the reaction L-aspartate(89)-[ribosomal protein uS12]-hydrogen + (sulfur carrier)-SH + AH2 + 2 S-adenosyl-L-methionine = 3-methylsulfanyl-L-aspartate(89)-[ribosomal protein uS12]-hydrogen + (sulfur carrier)-H + 5'-deoxyadenosine + L-methionine + A + S-adenosyl-L-homocysteine + 2 H(+). Functionally, catalyzes the methylthiolation of an aspartic acid residue of ribosomal protein uS12. This Bacteroides thetaiotaomicron (strain ATCC 29148 / DSM 2079 / JCM 5827 / CCUG 10774 / NCTC 10582 / VPI-5482 / E50) protein is Ribosomal protein uS12 methylthiotransferase RimO.